A 309-amino-acid chain; its full sequence is Olfactory receptor 8U9 (309 aa).

Residues 1–28 (MTQINCTQVTEFILVGLTDRQELKMPLF) are Extracellular-facing. N-linked (GlcNAc...) asparagine glycosylation is present at Asn5. The helical transmembrane segment at 29-49 (VLFLSIYLFTVVGNLGLILLI) threads the bilayer. Over 50 to 56 (RTDEKLN) the chain is Cytoplasmic. Residues 57–77 (TPMYFFLSNLAFVDFCYSSVI) form a helical membrane-spanning segment. At 78 to 97 (TPKMLGNFLYKQNSISFNAC) the chain is on the extracellular side. Cysteines 97 and 179 form a disulfide. Residues 98-118 (AAQLGCFLAFMTAECLLLASM) traverse the membrane as a helical segment. The Cytoplasmic segment spans residues 119-143 (AYDRYVAICNPLMYMVVMSPGICIQ). Residues 144–164 (LVAAPHSYSILVALFHTILTF) form a helical membrane-spanning segment. Residues 165–204 (RLSYCHSNIVNHFYCDDMPLLRLTCSDTRFKQLWIFACAG) lie on the Extracellular side of the membrane. The chain crosses the membrane as a helical span at residues 205 to 225 (IMFISSLLIVFVSYMFIISAI). Residues 226–239 (LRMHSAEGRQKAFS) are Cytoplasmic-facing. A helical membrane pass occupies residues 240–260 (TCGSHMLAVTIFYGTLIFMYL). At 261–272 (QPSSSHALDTDK) the chain is on the extracellular side. A helical membrane pass occupies residues 273 to 293 (MASVFYTVIIPMLNPLIYSLQ). The Cytoplasmic segment spans residues 294 to 309 (NKEVKEALKKIIINKN).

Belongs to the G-protein coupled receptor 1 family.

It localises to the cell membrane. Odorant receptor. The chain is Olfactory receptor 8U9 (OR8U9) from Homo sapiens (Human).